The following is a 229-amino-acid chain: ATP synthase subunit a (229 aa).

The next 6 helical transmembrane spans lie at 25–45 (ADAVVYTWLIMIGLVVLSIAA), 82–102 (FFPLVATLALFILVSNLIGLV), 104–124 (GFFPPTANINTTAACAVVVFV), 142–162 (FLGPIAWLAPMMFFIEVIGHL), 181–201 (LVLIIFFGLAPFIVPLPMMLM), and 202–222 (GVLVSFIQAFVFMLLAMIYIQ).

The protein belongs to the ATPase A chain family. As to quaternary structure, F-type ATPases have 2 components, CF(1) - the catalytic core - and CF(0) - the membrane proton channel. CF(1) has five subunits: alpha(3), beta(3), gamma(1), delta(1), epsilon(1). CF(0) has three main subunits: a(1), b(2) and c(9-12). The alpha and beta chains form an alternating ring which encloses part of the gamma chain. CF(1) is attached to CF(0) by a central stalk formed by the gamma and epsilon chains, while a peripheral stalk is formed by the delta and b chains.

It localises to the cell inner membrane. Key component of the proton channel; it plays a direct role in the translocation of protons across the membrane. The protein is ATP synthase subunit a of Citrifermentans bemidjiense (strain ATCC BAA-1014 / DSM 16622 / JCM 12645 / Bem) (Geobacter bemidjiensis).